Here is a 1064-residue protein sequence, read N- to C-terminus: Lysine-specific demethylase 4A (1064 aa).

Ala-2 is modified (N-acetylalanine). The region spanning 14–56 (IMTFYPTMEEFRNFSRYIAYIESQGAHRAGLAKVVPPKEWKPR) is the JmjN domain. Tyr-132 contacts 2-oxoglutarate. One can recognise a JmjC domain in the interval 142-308 (EKHVDEWNIG…YGKQAVLCSC (167 aa)). The Fe cation site is built by His-188 and Glu-190. Residues Asn-198 and Lys-206 each contribute to the 2-oxoglutarate site. Zn(2+) contacts are provided by Cys-234 and His-240. Position 241 (Lys-241) interacts with 2-oxoglutarate. A Fe cation-binding site is contributed by His-276. Residues Cys-306 and Cys-308 each contribute to the Zn(2+) site. A disordered region spans residues 358-384 (ELPPRAGNEEECPEEDMEGVEDGEEGD). Acidic residues predominate over residues 366-382 (EEECPEEDMEGVEDGEE). Lys-471 is covalently cross-linked ((Microbial infection) Glycyl lysine isopeptide (Lys-Gly) (interchain with G-Cter in SUMO)). Disordered stretches follow at residues 501 to 537 (FSGSKKKSSSSLGSGSSRDSISSDSETSEPLSCRAQG) and 616 to 641 (SDDETSEQLTPEEEAEETEAWAKPLS). Positions 509 to 532 (SSSLGSGSSRDSISSDSETSEPLS) are enriched in low complexity. At Ser-523 the chain carries Phosphoserine. The segment at 597-638 (RQPLSKLPRHHPLVLQECVSDDETSEQLTPEEEAEETEAWAK) is interaction with NCOR1. Residues 616-634 (SDDETSEQLTPEEEAEETE) are compositionally biased toward acidic residues. The PHD-type 1 zinc-finger motif lies at 709–767 (MCFTSTGCSTDINLSTPYLEEDGTSILVSCKKCSVRVHASCYGVPPAKASEDWMCSRCS). A C2HC pre-PHD-type zinc finger spans residues 772-805 (EEDCCLCSLRGGALQRANDDRWVHVSCAVAILEA). The segment at 828 to 885 (LKCIFCKKRRKRTAGCCVQCSHGRCPTAFHVSCAQAAGVMMQPDDWPFVVFITCFRHK) adopts a PHD-type 2 zinc-finger fold. Tudor domains lie at 897 to 954 (QSIT…CLQF) and 955 to 1011 (GPPA…EELP).

The protein belongs to the JHDM3 histone demethylase family. Interacts with histone deacetylase proteins HDAC1, HDAC2 and HDAC3. Interacts with RB and NCOR1. Interacts with VRK1. Interacts with FBXO22; this interaction promotes KDM4A ubiquitination. In terms of assembly, (Microbial infection) Interacts with HTLV-1 Tax protein. Fe(2+) serves as cofactor. In terms of processing, (Microbial infection) SUMOylated by human herpesvirus 8 E3 SUMO-protein ligase K-bZIP/K8 at Lys-471; thereby modulating the chromatin binding and histone demethylase activity of KDM4A. Ubiquitinated by RNF8 and RNF168 following DNA damage, leading to its degradation. Degradation promotes accessibility of H4K20me2 mark for DNA repair protein TP53BP1, which is then recruited. Also ubiquitinated by the SCF(FBXO22) complex; leading to proteasomal degradation. As to expression, ubiquitous.

It is found in the nucleus. The enzyme catalyses N(6),N(6),N(6)-trimethyl-L-lysyl(9)-[histone H3] + 2 2-oxoglutarate + 2 O2 = N(6)-methyl-L-lysyl(9)-[histone H3] + 2 formaldehyde + 2 succinate + 2 CO2. It catalyses the reaction N(6),N(6),N(6)-trimethyl-L-lysyl(36)-[histone H3] + 2 2-oxoglutarate + 2 O2 = N(6)-methyl-L-lysyl(36)-[histone H3] + 2 formaldehyde + 2 succinate + 2 CO2. With respect to regulation, several specific inhibitors are being developed and tested. In terms of biological role, histone demethylase that specifically demethylates 'Lys-9' and 'Lys-36' residues of histone H3, thereby playing a central role in histone code. Does not demethylate histone H3 'Lys-4', H3 'Lys-27' nor H4 'Lys-20'. Demethylates trimethylated H3 'Lys-9' and H3 'Lys-36' residue, while it has no activity on mono- and dimethylated residues. Demethylation of Lys residue generates formaldehyde and succinate. Participates in transcriptional repression of ASCL2 and E2F-responsive promoters via the recruitment of histone deacetylases and NCOR1, respectively. Functionally, crucial for muscle differentiation, promotes transcriptional activation of the Myog gene by directing the removal of repressive chromatin marks at its promoter. Lacks the N-terminal demethylase domain. This is Lysine-specific demethylase 4A (KDM4A) from Homo sapiens (Human).